Consider the following 342-residue polypeptide: Phenylalanine--tRNA ligase alpha subunit (342 aa).

E257 lines the Mg(2+) pocket.

The protein belongs to the class-II aminoacyl-tRNA synthetase family. Phe-tRNA synthetase alpha subunit type 1 subfamily. Tetramer of two alpha and two beta subunits. The cofactor is Mg(2+).

Its subcellular location is the cytoplasm. The enzyme catalyses tRNA(Phe) + L-phenylalanine + ATP = L-phenylalanyl-tRNA(Phe) + AMP + diphosphate + H(+). The sequence is that of Phenylalanine--tRNA ligase alpha subunit (pheS) from Chlamydia trachomatis serovar D (strain ATCC VR-885 / DSM 19411 / UW-3/Cx).